The primary structure comprises 232 residues: MSLFNTVRNTIVPVHKEGYPFVAAFFVASLVLGWIFKPLFWIGMIFTLWCAYFFRDPERVTPQDDDLVISPADGKVSAIQMVTPPAELNLGSEPMLRISVFMNVFNCHVNRAPMHGRIVSINYRSGSFVNAELDKASEDNERNGLVIETGHGQIGVVQIAGLVARRILCWANPNEPVDAGERFGLIRFGSRLDVFLPAGAAPRVSLGQTAVAGETVIAEFASAKGPVISRRS.

Ser-190 serves as the catalytic Schiff-base intermediate with substrate; via pyruvic acid. Ser-190 is subject to Pyruvic acid (Ser); by autocatalysis.

It belongs to the phosphatidylserine decarboxylase family. PSD-A subfamily. In terms of assembly, heterodimer of a large membrane-associated beta subunit and a small pyruvoyl-containing alpha subunit. Pyruvate serves as cofactor. In terms of processing, is synthesized initially as an inactive proenzyme. Formation of the active enzyme involves a self-maturation process in which the active site pyruvoyl group is generated from an internal serine residue via an autocatalytic post-translational modification. Two non-identical subunits are generated from the proenzyme in this reaction, and the pyruvate is formed at the N-terminus of the alpha chain, which is derived from the carboxyl end of the proenzyme. The post-translation cleavage follows an unusual pathway, termed non-hydrolytic serinolysis, in which the side chain hydroxyl group of the serine supplies its oxygen atom to form the C-terminus of the beta chain, while the remainder of the serine residue undergoes an oxidative deamination to produce ammonia and the pyruvoyl prosthetic group on the alpha chain.

The protein localises to the cell membrane. It catalyses the reaction a 1,2-diacyl-sn-glycero-3-phospho-L-serine + H(+) = a 1,2-diacyl-sn-glycero-3-phosphoethanolamine + CO2. The protein operates within phospholipid metabolism; phosphatidylethanolamine biosynthesis; phosphatidylethanolamine from CDP-diacylglycerol: step 2/2. Functionally, catalyzes the formation of phosphatidylethanolamine (PtdEtn) from phosphatidylserine (PtdSer). In Rhizobium johnstonii (strain DSM 114642 / LMG 32736 / 3841) (Rhizobium leguminosarum bv. viciae), this protein is Phosphatidylserine decarboxylase proenzyme.